Here is a 371-residue protein sequence, read N- to C-terminus: MRPLPSQLPIPLSPEGYGRFAVEFYKRVAVGILGENLVLSPYSVYKAFAMAYAGASGATREELKAVFGFGEDPCVLPAASRGVEEALSAWLQTDFPFKPNYLNKLRCIGAEAKYVDFERDYKSAIAAINKWAEEKTRGLIKDLVPADYPEGWDVRAVLVSALYFKGNWWPDRFQRVGKREFKGAGPADFIALDLSSCGDPSLRGRASSDLTVVELPFNNTEVALYIIMPRDLPSFVKELTYEKLREIISTLPDQVIRVEMPLFKAEFKGSVKQALREMGVVRAFETADFTEMAYRRLYIDDVFHGAYLNADENGVVAAAATAVVFKPVCAKGGGVEVVVDKPFLFVLADRTSGVIYFIGHVVNPSPGFTPT.

This sequence belongs to the serpin family.

This is an uncharacterized protein from Pyrobaculum aerophilum (strain ATCC 51768 / DSM 7523 / JCM 9630 / CIP 104966 / NBRC 100827 / IM2).